We begin with the raw amino-acid sequence, 473 residues long: MSELSTYKGYSPKHGDKVPVLQNLNDLTPKDFYDKFIATRTPVIIKSSLPESDWKGYLWQQQDYLLSKIGDIVCKVEPIDPVSGTFGQGMSRNEMSIKEFFQKLKNGERLYLTTQYDESNEVLDGDDEVSLLVKSLCPHPTDGLLTDFSITPALMGNLVPQQCNLWIGKSENGTSSGLHHDFHDNIYAVISGYKRFVIISPDHANQLKLSGKISKIHPNGLISYEGEDCPQRSDGLTELDAAIAKTQFLEKKIGSLKELAVPQESIELLEAEYENEMDRVLQMQIGGPEEDWNDLEEGDAASLLDGSVGGDPESDILLNEGNDIEATSLQDTKPELPDHFTKVSVNGLHKFMGFDDAKNVDVDKDELSALAGTVPLVVDLEPGDMLYLPASWFHEVTSSSASSGGSDVHIAFNYWFHPPDNLEDFDHPYLDRNIWQAKRHLVGEAIDQLYATNKKNEKRPAEDDSPSQKKTCQ.

The 294-residue stretch at 140 to 433 (PTDGLLTDFS…DFDHPYLDRN (294 aa)) folds into the JmjC domain. The tract at residues 452–473 (TNKKNEKRPAEDDSPSQKKTCQ) is disordered.

It is found in the nucleus. Functionally, has a role in meiosis. In Schizosaccharomyces pombe (strain 972 / ATCC 24843) (Fission yeast), this protein is JmjC domain-containing protein 4 (jmj4).